The sequence spans 156 residues: Small ribosomal subunit protein uS7 (156 aa).

This sequence belongs to the universal ribosomal protein uS7 family. As to quaternary structure, part of the 30S ribosomal subunit. Contacts proteins S9 and S11.

Its function is as follows. One of the primary rRNA binding proteins, it binds directly to 16S rRNA where it nucleates assembly of the head domain of the 30S subunit. Is located at the subunit interface close to the decoding center, probably blocks exit of the E-site tRNA. The chain is Small ribosomal subunit protein uS7 from Rhizorhabdus wittichii (strain DSM 6014 / CCUG 31198 / JCM 15750 / NBRC 105917 / EY 4224 / RW1) (Sphingomonas wittichii).